An 83-amino-acid polypeptide reads, in one-letter code: U5-theraphotoxin-Hs1b 2 (83 aa).

The first 21 residues, 1–21 (MQTSMFLTLTGLVLLFVVCYA), serve as a signal peptide directing secretion. A propeptide spanning residues 22–49 (SESEEKEFPKELLSSIFAADSDFKEEER) is cleaved from the precursor. Disulfide bonds link Cys51-Cys63, Cys56-Cys68, and Cys62-Cys75.

The protein belongs to the neurotoxin 10 (Hwtx-1) family. 51 (Hntx-8) subfamily. Hntx-8 sub-subfamily. Expressed by the venom gland.

It localises to the secreted. Agglutinates erythrocytes. This chain is U5-theraphotoxin-Hs1b 2, found in Cyriopagopus schmidti (Chinese bird spider).